Reading from the N-terminus, the 285-residue chain is Integrin alpha-1 (285 aa).

Over 1 to 285 (ENMTFGTTLV…HYSQDWVMLG (285 aa)) the chain is Extracellular. 4 N-linked (GlcNAc...) asparagine glycosylation sites follow: Asn2, Asn40, Asn208, and Asn232. One can recognise a VWFA domain in the interval 66–279 (IVLDGSNSIY…QAGFSAHYSQ (214 aa)).

Belongs to the integrin alpha chain family. Heterodimer of an alpha and a beta subunit. Alpha-1 associates with beta-1.

It is found in the membrane. Its function is as follows. Integrin alpha-1/beta-1 is a receptor for laminin and collagen. It recognizes the proline-hydroxylated sequence G-F-P-G-E-R in collagen. Involved in anchorage-dependent, negative regulation of EGF-stimulated cell growth. The sequence is that of Integrin alpha-1 (ITGA1) from Gallus gallus (Chicken).